The chain runs to 431 residues: uncharacterized protein (431 aa).

The next 2 helical transmembrane spans lie at Leu-42–Leu-62 and Val-74–Leu-94. An N-linked (GlcNAc...) asparagine; by host glycan is attached at Asn-105. 5 helical membrane-spanning segments follow: residues Leu-111–Ile-131, Ala-153–Pro-173, Met-202–Tyr-222, Val-236–Leu-256, and Ala-279–Phe-299.

The protein resides in the membrane. This is an uncharacterized protein from Homo sapiens (Human).